The primary structure comprises 369 residues: Allantoicase (369 aa).

The segment at 341 to 369 (PDSKNNNNNNNNNNNNNTSNSFKTSDRQQ) is disordered. A compositionally biased stretch (low complexity) spans 345–357 (NNNNNNNNNNNNN).

The protein belongs to the allantoicase family.

The enzyme catalyses allantoate + H2O = (S)-ureidoglycolate + urea. Its pathway is nitrogen metabolism; (S)-allantoin degradation; (S)-ureidoglycolate from allantoate (aminidohydrolase route): step 1/1. Functionally, utilization of purines as secondary nitrogen sources, when primary sources are limiting. This chain is Allantoicase (allC), found in Dictyostelium discoideum (Social amoeba).